The following is a 499-amino-acid chain: Glycerol kinase 2 (499 aa).

Residue Thr13 participates in ADP binding. Thr13, Thr14, and Ser15 together coordinate ATP. Residue Thr13 coordinates sn-glycerol 3-phosphate. Arg17 lines the ADP pocket. Sn-glycerol 3-phosphate-binding residues include Arg83, Glu84, Tyr134, and Asp241. Glycerol is bound by residues Arg83, Glu84, Tyr134, Asp241, and Gln242. Residues Thr263 and Gly306 each contribute to the ADP site. Thr263, Gly306, Gln310, and Gly407 together coordinate ATP. Residue Gly407 participates in ADP binding.

It belongs to the FGGY kinase family.

The enzyme catalyses glycerol + ATP = sn-glycerol 3-phosphate + ADP + H(+). It participates in polyol metabolism; glycerol degradation via glycerol kinase pathway; sn-glycerol 3-phosphate from glycerol: step 1/1. Its function is as follows. Key enzyme in the regulation of glycerol uptake and metabolism. Catalyzes the phosphorylation of glycerol to yield sn-glycerol 3-phosphate. In Saccharolobus solfataricus (strain ATCC 35092 / DSM 1617 / JCM 11322 / P2) (Sulfolobus solfataricus), this protein is Glycerol kinase 2.